A 481-amino-acid polypeptide reads, in one-letter code: Arylsulfatase (481 aa).

Ca(2+)-binding residues include D11, Q12, and C51. C51 acts as the Nucleophile in catalysis. The residue at position 51 (C51) is a 3-oxoalanine (Cys). Residue H102 is part of the active site. Ca(2+)-binding residues include D302 and H303.

It belongs to the sulfatase family. Requires Ca(2+) as cofactor. Post-translationally, the conversion to 3-oxoalanine (also known as C-formylglycine, FGly), of a serine or cysteine residue in prokaryotes and of a cysteine residue in eukaryotes, is critical for catalytic activity.

It carries out the reaction an aryl sulfate + H2O = a phenol + sulfate + H(+). In terms of biological role, has sulfatase activity toward para-nitrophenyl sulfate, which is increased in presence of calcium ion. This is Arylsulfatase from Clostridium perfringens (strain 13 / Type A).